The primary structure comprises 60 residues: Bacteriochlorophyll c-binding protein (60 aa).

Met1 bears the N-formylmethionine mark. His25 contributes to the a bacteriochlorophyll c binding site.

This sequence belongs to the BChl C/E-binding protein family.

It localises to the chlorosome. It is found in the chlorosome envelope. Component of the photosynthetic apparatus. The light harvesting B740 complex binds bacteriochlorophyll c. The protein is Bacteriochlorophyll c-binding protein (csmA) of Pelodictyon luteolum.